Reading from the N-terminus, the 448-residue chain is Histidinol dehydrogenase (448 aa).

Residues Tyr-136, Gln-197, and Asn-220 each coordinate NAD(+). Substrate is bound by residues Ser-243, Gln-265, and His-268. Residues Gln-265 and His-268 each contribute to the Zn(2+) site. Active-site proton acceptor residues include Glu-333 and His-334. Residues His-334, Asp-367, Glu-421, and His-426 each contribute to the substrate site. Residue Asp-367 participates in Zn(2+) binding. His-426 contacts Zn(2+).

This sequence belongs to the histidinol dehydrogenase family. Zn(2+) is required as a cofactor.

The enzyme catalyses L-histidinol + 2 NAD(+) + H2O = L-histidine + 2 NADH + 3 H(+). Its pathway is amino-acid biosynthesis; L-histidine biosynthesis; L-histidine from 5-phospho-alpha-D-ribose 1-diphosphate: step 9/9. In terms of biological role, catalyzes the sequential NAD-dependent oxidations of L-histidinol to L-histidinaldehyde and then to L-histidine. This Pseudomonas syringae pv. syringae (strain B728a) protein is Histidinol dehydrogenase.